A 231-amino-acid polypeptide reads, in one-letter code: Insertion sequence IS1162 putative ATP-binding protein (231 aa).

107–114 (GPTGVGKT) provides a ligand contact to ATP.

This sequence belongs to the IS21/IS1162 putative ATP-binding protein family.

The polypeptide is Insertion sequence IS1162 putative ATP-binding protein (Pseudomonas fluorescens).